The following is a 344-amino-acid chain: Selenide, water dikinase (344 aa).

The active site involves C15. ATP contacts are provided by residues K18 and 46–48 (TKD). D49 provides a ligand contact to Mg(2+). Residues D66, D89, and 137–139 (GHS) contribute to the ATP site. D89 is a binding site for Mg(2+). D225 contacts Mg(2+).

The protein belongs to the selenophosphate synthase 1 family. Class I subfamily. As to quaternary structure, homodimer. Requires Mg(2+) as cofactor.

It carries out the reaction hydrogenselenide + ATP + H2O = selenophosphate + AMP + phosphate + 2 H(+). Synthesizes selenophosphate from selenide and ATP. The protein is Selenide, water dikinase of Colwellia psychrerythraea (strain 34H / ATCC BAA-681) (Vibrio psychroerythus).